Reading from the N-terminus, the 71-residue chain is MAIQSKYSNTQVESIIAELSAVLDKHQAPTDLRLMVLGNCVTDLLARKVPAEARASVAEQFSKALAQSVKG.

This sequence belongs to the UPF0352 family.

In Shewanella woodyi (strain ATCC 51908 / MS32), this protein is UPF0352 protein Swoo_2786.